The chain runs to 843 residues: Histone-lysine N-methyltransferase PRDM9 (843 aa).

Positions 23–86 (KVKDEFKDIS…QRQAMKPQIN (64 aa)) constitute a KRAB-related domain. Disordered stretches follow at residues 85–104 (INDS…VSPP) and 110–170 (VKHS…KKLK). 4 residues coordinate Zn(2+): cysteine 205, cysteine 208, cysteine 216, and histidine 219. The 115-residue stretch at 244–358 (PGLRISPSGI…PGCELLVWYG (115 aa)) folds into the SET domain. S-adenosyl-L-methionine-binding positions include 256 to 258 (AGL), tyrosine 291, and 320 to 321 (NC). Residue 288-294 (NSGYSWL) participates in substrate binding. Residue tyrosine 357 coordinates substrate. Lysine 368 is modified (N6,N6,N6-trimethyllysine; alternate). Lysine 368 is modified (N6-methyllysine; alternate). 2 positions are modified to N6-methyllysine: lysine 372 and lysine 374. Residues 388-411 (HPCLLCSLAFSSQKFLTQHMEWNH) form a C2H2-type 1 zinc finger. The Zn(2+) site is built by cysteine 390, cysteine 393, histidine 406, and histidine 411. Positions 418 to 493 (GTSARINPKP…VEELRTGQTT (76 aa)) are disordered. Residues 436-454 (QEQHVDSQNKNDKASNEVK) are compositionally biased toward basic and acidic residues. The segment covering 462–472 (RISTTFPSTLK) has biased composition (polar residues). Residues 473 to 488 (EQMRSEESKRTVEELR) are compositionally biased toward basic and acidic residues. The C2H2-type 2; degenerate zinc-finger motif lies at 513 to 531 (QCGQYFSDKSNVNEHQKTH). 11 C2H2-type zinc fingers span residues 537–559 (YVCR…QRTH), 565–587 (YVCR…QRTH), 593–615 (YVCR…QRTH), 621–643 (YVCR…QRTH), 649–671 (YVCR…QRTH), 677–699 (YVCR…QRTH), 705–727 (YVCR…QRTH), 733–755 (YVCR…QRTH), 761–783 (YVCR…QRTH), 789–811 (YVCR…QRTH), and 817–839 (YVCR…QRTH). Residues cysteine 707, cysteine 710, histidine 723, histidine 727, cysteine 735, cysteine 738, histidine 751, histidine 755, cysteine 763, cysteine 766, histidine 779, histidine 783, cysteine 791, cysteine 794, histidine 807, and histidine 811 each contribute to the Zn(2+) site. Residues 715-805 (TAKSNLIQHQ…RGFTQKSNLI (91 aa)) are DNA-binding.

It belongs to the class V-like SAM-binding methyltransferase superfamily. As to quaternary structure, homodimer. Interacts with EHMT2 and CDYL; interaction only takes place when PRDM9 is bound to hotspot DNA. Interacts with CXXC1; this interaction does not link PRDM9-activated recombination hotspot sites with DSB machinery and is not required for the hotspot recognition pathway. Forms a complex with EWSR1, REC8, SYCP3 and SYCP1; complex formation is dependent of phosphorylated form of REC8 and requires PRDM9 bound to hotspot DNA; EWSR1 joins PRDM9 with the chromosomal axis through REC8. In terms of processing, mono-methylated; automethylated. Tri-methylated; automethylated. Mono-methylation is predominant; automethylation is lower and slower than H3 peptide methylation and is in a highest S-adenosyl-L-methionine concentration-dependent. There are two major sites for automethylation at Lys-368 and Lys-374. Lysines can be simultaneously methylated, such as Lys-368(me3)/Lys-372(me1), Lys-368(me1)/Lys-374(me1) and Lys-368(me1)/Lys-372(me1)/Lys-374(me1). Automethylation is an intramolecular (cis) process. As to expression, specifically expressed in germ cells entering meiotic prophase in female fetal gonads and in postnatal testis. Expressed in early meiotic prophase.

It localises to the nucleus. Its subcellular location is the chromosome. It carries out the reaction L-lysyl-[protein] + S-adenosyl-L-methionine = N(6)-methyl-L-lysyl-[protein] + S-adenosyl-L-homocysteine + H(+). The enzyme catalyses N(6),N(6)-dimethyl-L-lysyl-[protein] + S-adenosyl-L-methionine = N(6),N(6),N(6)-trimethyl-L-lysyl-[protein] + S-adenosyl-L-homocysteine + H(+). It catalyses the reaction L-lysyl(4)-[histone H3] + 3 S-adenosyl-L-methionine = N(6),N(6),N(6)-trimethyl-L-lysyl(4)-[histone H3] + 3 S-adenosyl-L-homocysteine + 3 H(+). The catalysed reaction is L-lysyl(36)-[histone H3] + 3 S-adenosyl-L-methionine = N(6),N(6),N(6)-trimethyl-L-lysyl(36)-[histone H3] + 3 S-adenosyl-L-homocysteine + 3 H(+). It carries out the reaction L-lysyl(9)-[histone H3] + 3 S-adenosyl-L-methionine = N(6),N(6),N(6)-trimethyl-L-lysyl(9)-[histone H3] + 3 S-adenosyl-L-homocysteine + 3 H(+). The enzyme catalyses L-lysyl(20)-[histone H4] + S-adenosyl-L-methionine = N(6)-methyl-L-lysyl(20)-[histone H4] + S-adenosyl-L-homocysteine + H(+). It catalyses the reaction N(6)-methyl-L-lysyl(20)-[histone H4] + S-adenosyl-L-methionine = N(6),N(6)-dimethyl-L-lysyl(20)-[histone H4] + S-adenosyl-L-homocysteine + H(+). Histone methyltransferase that sequentially mono-, di-, and tri-methylates both 'Lys-4' (H3K4) and 'Lys-36' (H3K36) of histone H3 to produce respectively trimethylated 'Lys-4' (H3K4me3) and trimethylated 'Lys-36' (H3K36me3) histone H3 and plays a key role in meiotic prophase by determining hotspot localization thereby promoting meiotic recombination. Can also methylate all four core histones with H3 being the best substrate and the most highly modified. Is also able, on one hand, to mono and di-methylate H4K20 and on other hand to trimethylate H3K9 with the di-methylated H3K9 as the best substrate. During meiotic prophase, binds specific DNA sequences through its zinc finger domains thereby determining hotspot localization where it promotes local H3K4me3 and H3K36me3 enrichment on the same nucleosomes through its histone methyltransferase activity. Thereby promotes double-stranded breaks (DSB) formation, at this subset of PRDM9-binding sites, that initiates meiotic recombination for the proper meiotic progression. During meiotic progression hotspot-bound PRDM9 interacts with several complexes; in early leptonema binds CDYL and EHMT2 followed by EWSR1 and CXXC1 by the end of leptonema. EWSR1 joins PRDM9 with the chromosomal axis through REC8. In this way, controls the DSB repair pathway, pairing of homologous chromosomes and sex body formation. Moreover plays a central role in the transcriptional activation of genes during early meiotic prophase thanks to H3K4me3 and H3K36me3 enrichment that represents a specific tag for epigenetic transcriptional activation. In addition performs automethylation. Acetylation and phosphorylation of histone H3 attenuate or prevent histone H3 methylation. In Mus musculus (Mouse), this protein is Histone-lysine N-methyltransferase PRDM9.